The chain runs to 189 residues: Protein YOP1 (189 aa).

The Cytoplasmic portion of the chain corresponds to 1–35; that stretch reads MSQIIDQVQAALQNIDKELEKYPALKELEKQIPVP. A helical membrane pass occupies residues 36–55; the sequence is KSYILLGFVGFYFILIFLNI. Residues 56–57 are Lumenal-facing; the sequence is GG. A helical membrane pass occupies residues 58-78; that stretch reads IGQLLSNIAGLVIPGYYSLLA. Residues 79–88 are Cytoplasmic-facing; sequence LETPGKADDT. The helical transmembrane segment at 89-105 threads the bilayer; that stretch reads QYLTYWVVFATLNVFEF. Topologically, residues 106-108 are lumenal; the sequence is WSK. A helical transmembrane segment spans residues 109–127; it reads AILYWVPFYYLFKTAFLLY. At 128–189 the chain is on the cytoplasmic side; the sequence is IGLPQYGGAE…PQGHSTGVSH (62 aa).

This sequence belongs to the DP1 family. Oligomer.

The protein localises to the endoplasmic reticulum membrane. It is found in the golgi apparatus membrane. Its function is as follows. Required to generate and maintain the structure of the tubular endoplasmic reticulum network and the vacuole. Induces high curvature in membranes and causes membrane tubule formation. Involved in membrane/vesicle trafficking. The polypeptide is Protein YOP1 (YOP1) (Yarrowia lipolytica (strain CLIB 122 / E 150) (Yeast)).